A 104-amino-acid chain; its full sequence is Large ribosomal subunit protein uL24 (104 aa).

It belongs to the universal ribosomal protein uL24 family. In terms of assembly, part of the 50S ribosomal subunit.

One of two assembly initiator proteins, it binds directly to the 5'-end of the 23S rRNA, where it nucleates assembly of the 50S subunit. Functionally, one of the proteins that surrounds the polypeptide exit tunnel on the outside of the subunit. The protein is Large ribosomal subunit protein uL24 of Azotobacter vinelandii (strain DJ / ATCC BAA-1303).